The sequence spans 148 residues: Putative nickel-responsive regulator (148 aa).

4 residues coordinate Ni(2+): His-77, His-88, His-90, and Cys-96.

Belongs to the transcriptional regulatory CopG/NikR family. It depends on Ni(2+) as a cofactor.

Functionally, transcriptional regulator. The protein is Putative nickel-responsive regulator of Bradyrhizobium diazoefficiens (strain JCM 10833 / BCRC 13528 / IAM 13628 / NBRC 14792 / USDA 110).